Consider the following 1498-residue polypeptide: MNRGRSMATPGEQCAGLRVWNQTEQEPAAYHLLSLCFVRAASSWVPPMYLWVLGPIYLLYIHRHGRCYLRMSHLFKTKMVLGLALILLYTFNVAVPLWRIHQGVPQAPELLIHPTVWLTTMSFATFLIHMERRKGVRSSGVLFGYWLLCCILPGINTVQQASAGNFRQEPLHHLATYLCLSLVVAELVLSCLVDQPPFFSEDSQPLNPCPEAEASFPSKAMFWWASGLLWRGYKKLLGPKDLWSLGRENSSEELVSQLEREWRRSCNGLPGHKGHSSVGAPETEAFLQPERSQRGPLLRAIWRVFRSTFLLGTLSLVISDAFRFAVPKLLSLFLEFMGDRNSSAWTGWLLAVLMFAAACLQTLFEQQHMYRAKVLQMRLRTAITGLVYRKVLVLSSGSRKSSAAGDVVNLVSVDIQRLAESIIYLNGLWLLFLWIFVCFVYLWQLLGPSALTAVAVFLSLLPLNFFITKKRGFHQEEQMRQKASRARLTSSMLRTVRTIKSHGWEHAFLERLLHIRGQELSALKTSTLLFSVSLVSFQVSTFLVALVVFAVHTLVAEDNAMDAEKAFVTLTVLSILNKAQAFLPFSVHCIVQARVSFDRLAAFLCLEEVDPNGMIASNSRRSSKDRISVHNGTFAWSQESPPCLHGINLTVPQGCLLAVVGPVGAGKSSLLSALLGELLKVEGSVSIEGSVAYVPQEAWVQNTSVVENVCFRQELDLPWLQKVLDACALGSDVASFPAGVHTPIGEQGMNLSGGQKQRLSLARAVYKKAAIYLLDDPLAALDAHVSQQVFKQVIGPSGLLQGTTRILVTHTLHVLPQADRILVLANGTIAEMGSYQDLLQRNGALVGLLDGARQPAGTHDAATSDDLGGFPGGGRPTCRPDRPRPTEAAPVKGRSTSEVQMEASLDDPEATGLTAEEDSVRYGRVKTTIYLSYLRAVGTPLCTYTLFLFLCQQVASFSQGYWLSLWADDPVVDGRQMHAALRGWVFGLLGCLQAIGLFASMAAVFLGGARASGLLFRSLLWDVARSPIGFFERTPVGNLLNRFSKETDTVDVDIPDKLRSLLTYAFGLLEVGLAVTMATPLAIVAILPLMVLYAGFQSLYVATSCQLRRLESARYSSVCSHMAETFQGSLVVRAFRAQASFTAQHDALMDENQRVSFPKLVADRWLATNLELLGNGLVFVAATCAVLSKAHLSAGLVGFSVSAALQVTQTLQWVVRSWTDLENSMVAVERVQDYARIPKEAPWRLPTCAAQPLWPCGGQIEFRDFGLRHRPELPLAVQGVSLKIHAGEKVGIVGRTGAGKSSLAWGLLRLQEAAEGNIWIDGVPITHVGLHTLRSRITIIPQDPVLFPGSLRMNLDLLQEHTDEGIWAALETVQLKAFVTSLPGQLQYECAGQGDDLSVGQKQLLCLARALLRKTQILILDEATASVDPGTEMQMQAALERWFTQCTVLLIAHRLRSVMDCARVLVMDEGQVAESGSPAQLLAQKGLFYRLAHESGLA.

The Extracellular segment spans residues 1–37 (MNRGRSMATPGEQCAGLRVWNQTEQEPAAYHLLSLCF). Asn21 carries an N-linked (GlcNAc...) asparagine glycan. A helical transmembrane segment spans residues 38–58 (VRAASSWVPPMYLWVLGPIYL). Topologically, residues 59-78 (LYIHRHGRCYLRMSHLFKTK) are cytoplasmic. Residues 79-99 (MVLGLALILLYTFNVAVPLWR) form a helical membrane-spanning segment. Over 100–104 (IHQGV) the chain is Extracellular. Residues 105–125 (PQAPELLIHPTVWLTTMSFAT) form a helical membrane-spanning segment. At 126 to 137 (FLIHMERRKGVR) the chain is on the cytoplasmic side. A helical membrane pass occupies residues 138–155 (SSGVLFGYWLLCCILPGI). Topologically, residues 156–173 (NTVQQASAGNFRQEPLHH) are extracellular. A helical membrane pass occupies residues 174–194 (LATYLCLSLVVAELVLSCLVD). At 195-300 (QPPFFSEDSQ…RSQRGPLLRA (106 aa)) the chain is on the cytoplasmic side. A helical transmembrane segment spans residues 301–321 (IWRVFRSTFLLGTLSLVISDA). One can recognise an ABC transmembrane type-1 1 domain in the interval 309 to 592 (FLLGTLSLVI…LPFSVHCIVQ (284 aa)). Residues 322-347 (FRFAVPKLLSLFLEFMGDRNSSAWTG) lie on the Extracellular side of the membrane. N-linked (GlcNAc...) asparagine glycosylation is present at Asn341. The helical transmembrane segment at 348–368 (WLLAVLMFAAACLQTLFEQQH) threads the bilayer. Over 369 to 424 (MYRAKVLQMRLRTAITGLVYRKVLVLSSGSRKSSAAGDVVNLVSVDIQRLAESIIY) the chain is Cytoplasmic. The helical transmembrane segment at 425-445 (LNGLWLLFLWIFVCFVYLWQL) threads the bilayer. Topologically, residues 446-448 (LGP) are extracellular. A helical transmembrane segment spans residues 449-469 (SALTAVAVFLSLLPLNFFITK). The Cytoplasmic segment spans residues 470–531 (KRGFHQEEQM…ALKTSTLLFS (62 aa)). Residues 532–552 (VSLVSFQVSTFLVALVVFAVH) form a helical membrane-spanning segment. Topologically, residues 553-574 (TLVAEDNAMDAEKAFVTLTVLS) are extracellular. The helical transmembrane segment at 575–595 (ILNKAQAFLPFSVHCIVQARV) threads the bilayer. Residues 596–934 (SFDRLAAFLC…VKTTIYLSYL (339 aa)) are Cytoplasmic-facing. The ABC transporter 1 domain maps to 627 to 851 (ISVHNGTFAW…NGALVGLLDG (225 aa)). 661-668 (GPVGAGKS) contacts ATP. Residues 855–910 (PAGTHDAATSDDLGGFPGGGRPTCRPDRPRPTEAAPVKGRSTSEVQMEASLDDPEA) form a disordered region. The chain crosses the membrane as a helical span at residues 935–955 (RAVGTPLCTYTLFLFLCQQVA). Residues 942-1223 (CTYTLFLFLC…VVRSWTDLEN (282 aa)) form the ABC transmembrane type-1 2 domain. The Extracellular segment spans residues 956 to 992 (SFSQGYWLSLWADDPVVDGRQMHAALRGWVFGLLGCL). Residues 993-1013 (QAIGLFASMAAVFLGGARASG) form a helical membrane-spanning segment. The Cytoplasmic segment spans residues 1014-1056 (LLFRSLLWDVARSPIGFFERTPVGNLLNRFSKETDTVDVDIPD). A helical transmembrane segment spans residues 1057 to 1077 (KLRSLLTYAFGLLEVGLAVTM). Position 1078 (Ala1078) is a topological domain, extracellular. A helical transmembrane segment spans residues 1079–1099 (TPLAIVAILPLMVLYAGFQSL). At 1100–1170 (YVATSCQLRR…VADRWLATNL (71 aa)) the chain is on the cytoplasmic side. Residues 1171–1191 (ELLGNGLVFVAATCAVLSKAH) form a helical membrane-spanning segment. The Extracellular portion of the chain corresponds to 1192–1193 (LS). The helical transmembrane segment at 1194-1214 (AGLVGFSVSAALQVTQTLQWV) threads the bilayer. At 1215-1498 (VRSWTDLENS…YRLAHESGLA (284 aa)) the chain is on the cytoplasmic side. An ABC transporter 2 domain is found at 1260–1494 (IEFRDFGLRH…KGLFYRLAHE (235 aa)). The residue at position 1281 (Ser1281) is a Phosphoserine. 1294-1301 (GRTGAGKS) is a binding site for ATP.

It belongs to the ABC transporter superfamily. ABCC family. Conjugate transporter (TC 3.A.1.208) subfamily. In terms of processing, glycosylated.

The protein resides in the basolateral cell membrane. The protein localises to the basal cell membrane. The catalysed reaction is an S-substituted glutathione(in) + ATP + H2O = an S-substituted glutathione(out) + ADP + phosphate + H(+). It carries out the reaction leukotriene C4(in) + ATP + H2O = leukotriene C4(out) + ADP + phosphate + H(+). In terms of biological role, ATP-dependent transporter of the ATP-binding cassette (ABC) family that actively extrudes physiological compounds, and xenobiotics from cells. Mediates ATP-dependent transport of glutathione conjugates such as leukotriene-c4 (LTC4) and N-ethylmaleimide S-glutathione (NEM-GS) (in vitro), and an anionic cyclopentapeptide endothelin antagonist, BQ-123. May contribute to regulate the transport of organic compounds in testes across the blood-testis-barrier. Its function is as follows. Mediates the release of nucleoside triphosphates, predominantly ATP, into the circulation, where it is rapidly converted into AMP and the mineralization inhibitor inorganic pyrophosphate (PPi) by the ecto-enzyme ectonucleotide pyrophosphatase phosphodiesterase 1 (ENPP1), therefore playing a role in PPi homeostasis. The sequence is that of ATP-binding cassette sub-family C member 6 (Abcc6) from Mus musculus (Mouse).